The primary structure comprises 174 residues: Squamosa promoter-binding-like protein 4 (174 aa).

Residues methionine 1–arginine 42 form a disordered region. Over residues valine 19 to valine 33 the composition is skewed to acidic residues. Residues leucine 51–serine 128 form an SBP-type zinc finger. Positions 54, 59, 76, 79, 95, 98, 102, and 114 each coordinate Zn(2+). Residues lysine 111–lysine 127 carry the Bipartite nuclear localization signal motif. The span at leucine 118–lysine 127 shows a compositional bias: basic residues. Disordered regions lie at residues leucine 118–valine 148 and serine 155–arginine 174. The segment covering methionine 163–arginine 174 has biased composition (polar residues).

It depends on Zn(2+) as a cofactor. In terms of tissue distribution, expressed in the rib meristem and inter-primordial tissue of the inflorescence apex.

The protein resides in the nucleus. Its subcellular location is the cytoplasm. Functionally, trans-acting factor that binds specifically to the consensus nucleotide sequence 5'-TNCGTACAA-3' of AP1 promoter. Promotes both vegetative phase change and flowering. The sequence is that of Squamosa promoter-binding-like protein 4 (SPL4) from Arabidopsis thaliana (Mouse-ear cress).